The chain runs to 249 residues: tRNA (guanine-N(1)-)-methyltransferase (249 aa).

S-adenosyl-L-methionine-binding positions include glycine 121 and 141–146 (LGDFVL).

This sequence belongs to the RNA methyltransferase TrmD family. As to quaternary structure, homodimer.

It localises to the cytoplasm. The catalysed reaction is guanosine(37) in tRNA + S-adenosyl-L-methionine = N(1)-methylguanosine(37) in tRNA + S-adenosyl-L-homocysteine + H(+). Specifically methylates guanosine-37 in various tRNAs. This is tRNA (guanine-N(1)-)-methyltransferase from Cereibacter sphaeroides (strain ATCC 17023 / DSM 158 / JCM 6121 / CCUG 31486 / LMG 2827 / NBRC 12203 / NCIMB 8253 / ATH 2.4.1.) (Rhodobacter sphaeroides).